The primary structure comprises 286 residues: Bifunctional protein FolD (286 aa).

Residues 165 to 167 (GRS), serine 190, and valine 231 each bind NADP(+).

This sequence belongs to the tetrahydrofolate dehydrogenase/cyclohydrolase family. As to quaternary structure, homodimer.

The catalysed reaction is (6R)-5,10-methylene-5,6,7,8-tetrahydrofolate + NADP(+) = (6R)-5,10-methenyltetrahydrofolate + NADPH. It catalyses the reaction (6R)-5,10-methenyltetrahydrofolate + H2O = (6R)-10-formyltetrahydrofolate + H(+). Its pathway is one-carbon metabolism; tetrahydrofolate interconversion. In terms of biological role, catalyzes the oxidation of 5,10-methylenetetrahydrofolate to 5,10-methenyltetrahydrofolate and then the hydrolysis of 5,10-methenyltetrahydrofolate to 10-formyltetrahydrofolate. The polypeptide is Bifunctional protein FolD (Bacillus cereus (strain AH187)).